A 204-amino-acid polypeptide reads, in one-letter code: Protease (204 aa).

Residues H54, D71, and C121 contribute to the active site.

This sequence belongs to the peptidase C5 family. As to quaternary structure, interacts with protease cofactor pVI-C; this interaction is necessary for protease activation.

The protein localises to the virion. The protein resides in the host nucleus. It carries out the reaction Cleaves proteins of the adenovirus and its host cell at two consensus sites: -Yaa-Xaa-Gly-Gly-|-Xaa- and -Yaa-Xaa-Gly-Xaa-|-Gly- (in which Yaa is Met, Ile or Leu, and Xaa is any amino acid).. Its activity is regulated as follows. Requires DNA and protease cofactor for maximal activation. Inside nascent virions, becomes partially activated by binding to the viral DNA, allowing it to cleave the cofactor that binds to the protease and fully activates it. Actin, like the viral protease cofactor, seems to act as a cofactor in the cleavage of cytokeratin 18 and of actin itself. Cleaves viral precursor proteins (pTP, pIIIa, pVI, pVII, pVIII, and pX) inside newly assembled particles giving rise to mature virions. Protease complexed to its cofactor slides along the viral DNA to specifically locate and cleave the viral precursors. Mature virions have a weakened organization compared to the unmature virions, thereby facilitating subsequent uncoating. Without maturation, the particle lacks infectivity and is unable to uncoat. Late in adenovirus infection, in the cytoplasm, may participate in the cytoskeleton destruction. Cleaves host cell cytoskeletal keratins K7 and K18. The sequence is that of Protease from Frog adenovirus 1 (strain ATCC VR-896) (FrAdV-1).